Here is a 265-residue protein sequence, read N- to C-terminus: 14-3-3-like protein GF14 nu (265 aa).

Residues Ser67, Ser109, and Ser190 each carry the phosphoserine modification. Thr211 carries the phosphothreonine modification. The interval 242 to 265 (AGGDEIKEASKHEPEEGKPAETGQ) is disordered. A compositionally biased stretch (basic and acidic residues) spans 245-265 (DEIKEASKHEPEEGKPAETGQ).

This sequence belongs to the 14-3-3 family. In terms of assembly, component of the SERK1 signaling complex, composed of KAPP, CDC48A, GRF6 or GRF7, SERK1, SERK2, SERK3/BAK1 and BRI1. Interacts with DREB1A and DREB1B in the nucleus. Interacts with CINV1.

It is found in the nucleus. Its subcellular location is the cytoplasm. Is associated with a DNA binding complex that binds to the G box, a well-characterized cis-acting DNA regulatory element found in plant genes. In Arabidopsis thaliana (Mouse-ear cress), this protein is 14-3-3-like protein GF14 nu (GRF7).